The sequence spans 397 residues: 3-ketoacyl-CoA thiolase, mitochondrial (397 aa).

Residues 1–16 (MALLRGVFIVAAKRTP) constitute a mitochondrion; not cleaved transit peptide. K25 is subject to N6-acetyllysine; alternate. K25 is subject to N6-succinyllysine; alternate. C92 (acyl-thioester intermediate) is an active-site residue. Position 119 is a phosphothreonine (T119). Position 121 is a phosphoserine (S121). Y127 is modified (phosphotyrosine). A Phosphothreonine modification is found at T136. Position 137 is an N6-acetyllysine; alternate (K137). Residue K137 is modified to N6-succinyllysine; alternate. At S140 the chain carries Phosphoserine. Residues K143, K171, K191, and K209 each carry the N6-acetyllysine; alternate modification. 4 positions are modified to N6-succinyllysine; alternate: K143, K171, K191, and K209. N6-succinyllysine is present on residues K212 and K214. The CoA site is built by R224 and T227. At K234 the chain carries N6-acetyllysine; alternate. K234 is modified (N6-succinyllysine; alternate). At K240 the chain carries N6-succinyllysine. K241 is subject to N6-acetyllysine. Residue S251 participates in CoA binding. Residues K269 and K270 each carry the N6-acetyllysine modification. Residue K305 is modified to N6-acetyllysine; alternate. K305 carries the post-translational modification N6-succinyllysine; alternate. S310 carries the post-translational modification Phosphoserine. Position 312 is an N6-acetyllysine; alternate (K312). K312 carries the N6-succinyllysine; alternate modification. Position 333 is a phosphoserine (S333). K340 and K375 each carry N6-acetyllysine. Residue C382 is the Proton donor/acceptor of the active site.

It belongs to the thiolase-like superfamily. Thiolase family. Homotetramer. Interacts with BNIP3.

It is found in the mitochondrion. It catalyses the reaction an acyl-CoA + acetyl-CoA = a 3-oxoacyl-CoA + CoA. The enzyme catalyses 2 acetyl-CoA = acetoacetyl-CoA + CoA. The catalysed reaction is acetyl-CoA + H2O = acetate + CoA + H(+). It carries out the reaction propanoyl-CoA + H2O = propanoate + CoA + H(+). It catalyses the reaction butanoyl-CoA + H2O = butanoate + CoA + H(+). The enzyme catalyses hexanoyl-CoA + H2O = hexanoate + CoA + H(+). The catalysed reaction is octanoyl-CoA + H2O = octanoate + CoA + H(+). It carries out the reaction decanoyl-CoA + H2O = decanoate + CoA + H(+). It catalyses the reaction dodecanoyl-CoA + H2O = dodecanoate + CoA + H(+). The enzyme catalyses tetradecanoyl-CoA + H2O = tetradecanoate + CoA + H(+). The catalysed reaction is hexadecanoyl-CoA + H2O = hexadecanoate + CoA + H(+). It participates in lipid metabolism; fatty acid beta-oxidation. Its function is as follows. In the production of energy from fats, this is one of the enzymes that catalyzes the last step of the mitochondrial beta-oxidation pathway, an aerobic process breaking down fatty acids into acetyl-CoA. Using free coenzyme A/CoA, catalyzes the thiolytic cleavage of medium- to long-chain unbranched 3-oxoacyl-CoAs into acetyl-CoA and a fatty acyl-CoA shortened by two carbon atoms. Also catalyzes the condensation of two acetyl-CoA molecules into acetoacetyl-CoA and could be involved in the production of ketone bodies. Also displays hydrolase activity on various fatty acyl-CoAs. Thereby, could be responsible for the production of acetate in a side reaction to beta-oxidation. Abolishes BNIP3-mediated apoptosis and mitochondrial damage. This is 3-ketoacyl-CoA thiolase, mitochondrial (ACAA2) from Bos taurus (Bovine).